Reading from the N-terminus, the 165-residue chain is 3-isopropylmalate dehydratase small subunit (165 aa).

This sequence belongs to the LeuD family. LeuD type 2 subfamily. As to quaternary structure, heterodimer of LeuC and LeuD.

It catalyses the reaction (2R,3S)-3-isopropylmalate = (2S)-2-isopropylmalate. The protein operates within amino-acid biosynthesis; L-leucine biosynthesis; L-leucine from 3-methyl-2-oxobutanoate: step 2/4. Its function is as follows. Catalyzes the isomerization between 2-isopropylmalate and 3-isopropylmalate, via the formation of 2-isopropylmaleate. The sequence is that of 3-isopropylmalate dehydratase small subunit from Saccharolobus islandicus (strain M.16.27) (Sulfolobus islandicus).